Reading from the N-terminus, the 470-residue chain is Poly(A) polymerase catalytic subunit (470 aa).

Residues Asp192 and Asp194 contribute to the active site.

The protein belongs to the poxviridae poly(A) polymerase catalytic subunit family. As to quaternary structure, heterodimer of a large (catalytic) subunit and a small (regulatory) subunit.

It catalyses the reaction RNA(n) + ATP = RNA(n)-3'-adenine ribonucleotide + diphosphate. In terms of biological role, polymerase that creates the 3'-poly(A) tail of mRNA's. The sequence is that of Poly(A) polymerase catalytic subunit (PAPL) from Homo sapiens (Human).